We begin with the raw amino-acid sequence, 205 residues long: Probable thymidylate kinase (205 aa).

Position 9 to 16 (Gly-9 to Ser-16) interacts with ATP.

The protein belongs to the thymidylate kinase family.

It catalyses the reaction dTMP + ATP = dTDP + ADP. The protein is Probable thymidylate kinase of Caldivirga maquilingensis (strain ATCC 700844 / DSM 13496 / JCM 10307 / IC-167).